The primary structure comprises 541 residues: Zinc finger protein 655 (541 aa).

The tract at residues 1–22 is disordered; that stretch reads MEEVTSQEAAESPRGHFQPLEN. 6 consecutive C2H2-type zinc fingers follow at residues 243–265, 271–293, 334–356, 361–383, 411–433, and 439–461; these read YKCDTCGKTFHQASALTRHQRIH, YKCKECEKSFSQSSSLSRHKRIH, YKCGTCERVFSRSVHLTQHQRTH, CKCTVCGSDFCHTSYLVEHQRLH, YSCNECGKDFRLNSHLIQHQRIH, and HECNECGKSFSQTSCLIQHHKMH. The segment at 495 to 517 adopts a C2H2-type 7; degenerate zinc-finger fold; sequence FDCDAWEENFSQRAHLIQHERVH.

This sequence belongs to the krueppel C2H2-type zinc-finger protein family. Interacts with VAV1 and CDK4. Interacts with INTS13; promoting association with the integrator complex.

It localises to the nucleus. Probable transcription factor. The polypeptide is Zinc finger protein 655 (Znf655) (Mus musculus (Mouse)).